We begin with the raw amino-acid sequence, 197 residues long: Holliday junction branch migration complex subunit RuvA (197 aa).

The tract at residues 1-64 (MIASVRGVVQ…EDMLALFGFS (64 aa)) is domain I. Residues 65 to 143 (SPAQRALFEL…VATISPQLST (79 aa)) are domain II. Positions 144-153 (NPGLLALNTE) are flexible linker. The domain III stretch occupies residues 153 to 197 (ELIDILTSLGYSTTEAQAALNALPADAPADTEERLRLALQYFGGV).

The protein belongs to the RuvA family. As to quaternary structure, homotetramer. Forms an RuvA(8)-RuvB(12)-Holliday junction (HJ) complex. HJ DNA is sandwiched between 2 RuvA tetramers; dsDNA enters through RuvA and exits via RuvB. An RuvB hexamer assembles on each DNA strand where it exits the tetramer. Each RuvB hexamer is contacted by two RuvA subunits (via domain III) on 2 adjacent RuvB subunits; this complex drives branch migration. In the full resolvosome a probable DNA-RuvA(4)-RuvB(12)-RuvC(2) complex forms which resolves the HJ.

The protein localises to the cytoplasm. Its function is as follows. The RuvA-RuvB-RuvC complex processes Holliday junction (HJ) DNA during genetic recombination and DNA repair, while the RuvA-RuvB complex plays an important role in the rescue of blocked DNA replication forks via replication fork reversal (RFR). RuvA specifically binds to HJ cruciform DNA, conferring on it an open structure. The RuvB hexamer acts as an ATP-dependent pump, pulling dsDNA into and through the RuvAB complex. HJ branch migration allows RuvC to scan DNA until it finds its consensus sequence, where it cleaves and resolves the cruciform DNA. The protein is Holliday junction branch migration complex subunit RuvA of Herpetosiphon aurantiacus (strain ATCC 23779 / DSM 785 / 114-95).